We begin with the raw amino-acid sequence, 100 residues long: Urease subunit gamma (100 aa).

Belongs to the urease gamma subunit family. As to quaternary structure, heterotrimer of UreA (gamma), UreB (beta) and UreC (alpha) subunits. Three heterotrimers associate to form the active enzyme.

The protein resides in the cytoplasm. The enzyme catalyses urea + 2 H2O + H(+) = hydrogencarbonate + 2 NH4(+). It participates in nitrogen metabolism; urea degradation; CO(2) and NH(3) from urea (urease route): step 1/1. In Lysinibacillus sphaericus (strain C3-41), this protein is Urease subunit gamma.